Consider the following 76-residue polypeptide: Dolichyl-diphosphooligosaccharide--protein glycosyltransferase subunit OST5 (76 aa).

2 helical membrane-spanning segments follow: residues 14–34 (FYPVCAFLFCVIGFAFFATFI) and 54–74 (ALIASMSLGLGLFFVLLAGGI).

Belongs to the OST5 family. Component of the oligosaccharyltransferase (OST) complex.

The protein localises to the membrane. Subunit of the oligosaccharyl transferase (OST) complex that catalyzes the initial transfer of a defined glycan (Glc(3)Man(9)GlcNAc(2) in eukaryotes) from the lipid carrier dolichol-pyrophosphate to an asparagine residue within an Asn-X-Ser/Thr consensus motif in nascent polypeptide chains, the first step in protein N-glycosylation. N-glycosylation occurs cotranslationally and the complex associates with the Sec61 complex at the channel-forming translocon complex that mediates protein translocation across the endoplasmic reticulum (ER). All subunits are required for a maximal enzyme activity. In Dictyostelium discoideum (Social amoeba), this protein is Dolichyl-diphosphooligosaccharide--protein glycosyltransferase subunit OST5.